Consider the following 511-residue polypeptide: Apolipoprotein N-acyltransferase (511 aa).

The next 6 helical transmembrane spans lie at 7–29 (PGWPGHLLALAAGALTPLALAPF), 58–78 (GWWYGFGAFGAGTSWIYVSIH), 90–110 (LLMLGFTAGVAFFFALPAWLW), 125–145 (LAFAALWLALELFRSWFLTGF), 163–183 (VPVGGVWLSSFVIALSAALLV), and 192–212 (GASLLLGLVLLLGPWAAGLYL). One can recognise a CN hydrolase domain in the interval 230–470 (IQGNIAQELK…QGILRGEVIP (241 aa)). The active-site Proton acceptor is the Glu-269. Residue Lys-330 is part of the active site. Cys-382 (nucleophile) is an active-site residue. The helical transmembrane segment at 482-502 (VWPLAGLAGVLLLWALLGRQL) threads the bilayer.

Belongs to the CN hydrolase family. Apolipoprotein N-acyltransferase subfamily.

It is found in the cell inner membrane. It carries out the reaction N-terminal S-1,2-diacyl-sn-glyceryl-L-cysteinyl-[lipoprotein] + a glycerophospholipid = N-acyl-S-1,2-diacyl-sn-glyceryl-L-cysteinyl-[lipoprotein] + a 2-acyl-sn-glycero-3-phospholipid + H(+). The protein operates within protein modification; lipoprotein biosynthesis (N-acyl transfer). In terms of biological role, catalyzes the phospholipid dependent N-acylation of the N-terminal cysteine of apolipoprotein, the last step in lipoprotein maturation. This chain is Apolipoprotein N-acyltransferase, found in Pseudomonas aeruginosa (strain LESB58).